A 414-amino-acid chain; its full sequence is 5-aminolevulinate synthase (414 aa).

Arg22, Ser133, and Lys152 together coordinate substrate. 3 residues coordinate pyridoxal 5'-phosphate: Ser185, His213, and Thr241. The active site involves Lys244. The residue at position 244 (Lys244) is an N6-(pyridoxal phosphate)lysine. Positions 273 and 274 each coordinate pyridoxal 5'-phosphate. A substrate-binding site is contributed by Thr359.

It belongs to the class-II pyridoxal-phosphate-dependent aminotransferase family. In terms of assembly, homodimer. Pyridoxal 5'-phosphate serves as cofactor.

The catalysed reaction is succinyl-CoA + glycine + H(+) = 5-aminolevulinate + CO2 + CoA. Its pathway is porphyrin-containing compound metabolism; protoporphyrin-IX biosynthesis; 5-aminolevulinate from glycine: step 1/1. The polypeptide is 5-aminolevulinate synthase (hemA) (Rickettsia typhi (strain ATCC VR-144 / Wilmington)).